A 472-amino-acid polypeptide reads, in one-letter code: 3-isopropylmalate dehydratase large subunit (472 aa).

Residues Cys-346, Cys-406, and Cys-409 each coordinate [4Fe-4S] cluster.

Belongs to the aconitase/IPM isomerase family. LeuC type 1 subfamily. As to quaternary structure, heterodimer of LeuC and LeuD. [4Fe-4S] cluster serves as cofactor.

The enzyme catalyses (2R,3S)-3-isopropylmalate = (2S)-2-isopropylmalate. It participates in amino-acid biosynthesis; L-leucine biosynthesis; L-leucine from 3-methyl-2-oxobutanoate: step 2/4. Functionally, catalyzes the isomerization between 2-isopropylmalate and 3-isopropylmalate, via the formation of 2-isopropylmaleate. The polypeptide is 3-isopropylmalate dehydratase large subunit (Thermus thermophilus (strain ATCC BAA-163 / DSM 7039 / HB27)).